The primary structure comprises 632 residues: uncharacterized protein (632 aa).

This sequence belongs to the MG032/MG096/MG288 family.

This is an uncharacterized protein from Mycoplasma pneumoniae (strain ATCC 29342 / M129 / Subtype 1) (Mycoplasmoides pneumoniae).